Here is a 295-residue protein sequence, read N- to C-terminus: 5,10-methylenetetrahydrofolate reductase (295 aa).

The active-site Proton donor/acceptor is the Glu-28. Thr-59 is a binding site for NADH. Positions 89, 119, 120, 121, 133, 153, 157, 160, 166, 169, 172, and 173 each coordinate FAD. Asp-121 is a binding site for (6S)-5-methyl-5,6,7,8-tetrahydrofolate. Gln-184 is an NADH binding site. Gln-184, Gln-220, and Lys-280 together coordinate (6S)-5-methyl-5,6,7,8-tetrahydrofolate.

The protein belongs to the methylenetetrahydrofolate reductase family. It depends on FAD as a cofactor.

It carries out the reaction (6S)-5-methyl-5,6,7,8-tetrahydrofolate + NAD(+) = (6R)-5,10-methylene-5,6,7,8-tetrahydrofolate + NADH + H(+). The protein operates within one-carbon metabolism; tetrahydrofolate interconversion. It functions in the pathway amino-acid biosynthesis; L-methionine biosynthesis via de novo pathway. Its function is as follows. Catalyzes the NADH-dependent reduction of 5,10-methylenetetrahydrofolate to 5-methyltetrahydrofolate. Is required to provide the methyl group necessary for methionine synthetase to convert homocysteine to methionine; the methyl group is given by 5-methyltetrahydrofolate. The chain is 5,10-methylenetetrahydrofolate reductase (metF) from Buchnera aphidicola subsp. Baizongia pistaciae (strain Bp).